Reading from the N-terminus, the 1016-residue chain is MEKIDGKDQSSQGDEEKEPPKSYPYSVETPYGFHLDLDFLKYVDDIEKGHTIKRIPIHRRAKQAKFSTLPRNFSLPNSGDRTYAVPPQQNWSPVVPRKISLGTQEPSQPLPLGDLPQASVQGSELNYHRKALLAKDARQAEAGSLEDVGSGRPQLLRASSMPATLLQNQVPEEPSLTSGPSTLLALPLLQDEGSVCDGAFDPAEGLMGFQASAQSVDRELGELEPAIPEQVWEGAEPEEGDLKASSHLSQPGPSSAVQSVPMDLEEVEIEHHMREAELVLTPGSATPSPPPLPSPILENDLSLDEIELSISEIPPPPPIEVDVRSIGIRVTEESLGLLETDTSSISSLKNQVLALEDKLSGRTEELARVRAALEQQEEETKAREQRIQELECTVAHLEEKLSQERASEAPDRTDATVNTDPLQELTPRESHDKNIGVNLLNTPDPECRAPRAEKNGFPWVQNNHKQSYPSPEEPVLPPQLSLPRGPEQILASSLCSCLSMELRIEEEGSEQEGGQEEGAGGLSRAAGESSWSTRESAPVIREEATSELPGAERPGRPASSPQDATIGQYVKKIQELLHEQWNCLEHGYPELASAIKQPASKLSSIQNQLLSSLNLLLSAYSAQAPEPEPKETPAPPPSTPPPPPPPPPEISPSTSLKSIMKKKDYGFRAGGNGTKKNLQFVGVNGGYETTSSEETSGEDSSPEDLSDSETEKKQDCSESREDRDLHPSCEAGQGVPEGTRNSGHTSDRGEEVSHLRAERYKPSEEFLNACQTLSQHLPETGDTTKQLLRQSLNTISQEWFRVSSRKLSSPEAVAAYLLEVQPHSPYLLKLLVNLADRSGNTALHYSVSHSNFAIVKLLLDTGVCNVDHQNKAGYTAVMITPLASAETKEDMAVVWKLLREGNVNIQATQGGQTALMLGVSHDREDMVQALLSCQADVNLQDNDGSSALMLACHQGNADLVRLLLAHPACNSSLTDKAGRTALSLVLNSPAHVEIAELLRAHSEPGRSLGPKELQKN.

Disordered stretches follow at residues 1–26 (MEKI…YPYS), 70–91 (PRNF…QQNW), 235–259 (AEPE…AVQS), 401–485 (LSQE…LPRG), 506–563 (EEGS…SPQD), and 622–755 (AQAP…VSHL). 2 stretches are compositionally biased toward polar residues: residues 70-80 (PRNFSLPNSGD) and 246-258 (SHLS…SAVQ). A coiled-coil region spans residues 346–409 (SSLKNQVLAL…KLSQERASEA (64 aa)). 2 stretches are compositionally biased toward basic and acidic residues: residues 401–414 (LSQE…DRTD) and 445–454 (PECRAPRAEK). Positions 460–469 (VQNNHKQSYP) are enriched in polar residues. Over residues 632 to 650 (TPAPPPSTPPPPPPPPPEI) the composition is skewed to pro residues. Threonine 639 bears the Phosphothreonine mark. Positions 695–708 (TSGEDSSPEDLSDS) are enriched in acidic residues. Basic and acidic residues-rich tracts occupy residues 709 to 727 (ETEK…DLHP) and 745 to 755 (TSDRGEEVSHL). ANK repeat units lie at residues 838–868 (SGNT…NVDH), 877–905 (VMIT…NVNI), 910–939 (GGQT…DVNL), 943–973 (DGSS…NSSL), and 977–1007 (AGRT…PGRS).

The protein resides in the cytoplasm. May be involved in the control of cytoskeleton formation by regulating actin polymerization. This is KN motif and ankyrin repeat domain-containing protein 4 (Kank4) from Mus musculus (Mouse).